A 199-amino-acid chain; its full sequence is Small ribosomal subunit protein uS5 (199 aa).

Residues 1 to 28 form a disordered region; sequence MARTPNTDRRQRGGDDQRNRSPRSDERD. The S5 DRBM domain maps to 31 to 94; it reads FLDKLVHINR…DQAKRTMIKV (64 aa).

The protein belongs to the universal ribosomal protein uS5 family. As to quaternary structure, part of the 30S ribosomal subunit. Contacts proteins S4 and S8.

With S4 and S12 plays an important role in translational accuracy. Functionally, located at the back of the 30S subunit body where it stabilizes the conformation of the head with respect to the body. The protein is Small ribosomal subunit protein uS5 of Rhodospirillum rubrum (strain ATCC 11170 / ATH 1.1.1 / DSM 467 / LMG 4362 / NCIMB 8255 / S1).